Consider the following 574-residue polypeptide: Probable E3 ubiquitin-protein ligase ipaH4.5 (574 aa).

Residues 1–284 (MKPINNHSFF…YHGPQIYFSM (284 aa)) form an interaction with target proteins region. 10 LRR repeats span residues 63-82 (REPV…PLPL), 83-104 (HIRE…SPLL), 105-122 (TELH…TLPS), 123-143 (QLIK…SLPP), 144-165 (YLQS…PSTL), 166-183 (TILR…ELPH), 184-205 (RLQE…PQSL), 206-223 (KYLK…RLPQ), 224-246 (ELLA…ITLP), and 247-270 (ICTN…QRLT). A linker region spans residues 285–292 (SDGQQNTL). The segment at 293–574 (HRPLADAVTA…YRQLTDEVLA (282 aa)) is E3 ubiquitin-protein ligase catalytic domain. The 280-residue stretch at 295 to 574 (PLADAVTAWF…YRQLTDEVLA (280 aa)) folds into the NEL domain. Catalysis depends on Cys-379, which acts as the Glycyl thioester intermediate.

This sequence belongs to the LRR-containing bacterial E3 ligase family. Ubiquitinated in the presence of host E1 ubiquitin-activating enzyme, E2 ubiquitin-conjugating enzyme and ubiquitin.

The protein localises to the secreted. It localises to the host cytoplasm. The catalysed reaction is S-ubiquitinyl-[E2 ubiquitin-conjugating enzyme]-L-cysteine + [acceptor protein]-L-lysine = [E2 ubiquitin-conjugating enzyme]-L-cysteine + N(6)-ubiquitinyl-[acceptor protein]-L-lysine.. Functionally, effector proteins function to alter host cell physiology and promote bacterial survival in host tissues. This protein is an E3 ubiquitin ligase that interferes with host's ubiquitination pathway. This is Probable E3 ubiquitin-protein ligase ipaH4.5 (ipaH4.5) from Shigella flexneri.